A 1861-amino-acid chain; its full sequence is Golgi-specific brefeldin A-resistance guanine nucleotide exchange factor 1 (1861 aa).

Positions 1-211 (MVDKNIYIIQ…EPKSYVGTNM (211 aa)) are DCB; DCB:DCB domain and DCB:HUS domain interaction. The interaction with RAB1B stretch occupies residues 1-380 (MVDKNIYIIQ…SVHDMDYVNP (380 aa)). Disordered stretches follow at residues 210–264 (NMKK…LTGG) and 289–353 (CTDS…VESI). A compositionally biased stretch (basic residues) spans 227–241 (WKKQKRSPRPPRHTT). Residues 253–262 (NGATLPSNLT) are compositionally biased toward polar residues. Phosphoserine occurs at positions 349 and 352. Position 507 is a phosphothreonine (Thr-507). Residues 530 to 550 (RIPSFVTELYINYDCDYYCSN) form an HUS; DCB:HUS domain interaction region. Residues 603–634 (QEKKETARPGFEAVDGNPETNKSERATSDGKS) form a disordered region. An SEC7 domain is found at 692 to 882 (ELIEIKNKKK…EDMYHAIKNE (191 aa)). The tract at residues 886 to 1372 (MPEEQTGLVR…LSRPGPSPLV (487 aa)) is phosphatidylinositol-phosphate binding; required for translocation to the leading edge and for ARF1 activation upon GPCR signaling. Residues 1286 to 1296 (TARADAPDAGA) show a composition bias toward low complexity. Positions 1286-1335 (TARADAPDAGAQSDSELPSYHQNDVSLDRGYTSDSEVYTDHGRPGKIHRS) are disordered. Residues 1297 to 1310 (QSDSELPSYHQNDV) are compositionally biased toward polar residues. At Ser-1298 the chain carries Phosphoserine. A Phosphotyrosine modification is found at Tyr-1316. Phosphoserine occurs at positions 1318, 1320, and 1335. The residue at position 1337 (Thr-1337) is a Phosphothreonine. 2 disordered regions span residues 1431–1486 (GCKS…EGVP) and 1727–1812 (PMPA…PLIL). Basic and acidic residues predominate over residues 1434 to 1448 (SQDKRSKSHKYDSKG). Phosphoserine is present on residues Ser-1477, Ser-1775, and Ser-1786. Over residues 1776-1793 (TRAPSSSSPGSPMASSPS) the composition is skewed to low complexity.

Can form homodimers and probably homotetramers. Interacts with COPG1; the interaction is independent on ARF1 activation. Interacts with ARF1, ARF3, ARF4 and ARF5. Interacts with RAB1B (GTP-bound form); required for GBF1 membrane association. Interacts with GGA1, GGA2 and GGA3. Interacts with USO1. Interacts (via SEC7 domain) with PNPLA2 (via C-terminus); the interaction is direct. Interacts with ARMH3.

The protein resides in the golgi apparatus. It is found in the cis-Golgi network. The protein localises to the endoplasmic reticulum-Golgi intermediate compartment. It localises to the trans-Golgi network. Its subcellular location is the cytoplasm. The protein resides in the lipid droplet. It is found in the membrane. In terms of biological role, guanine-nucleotide exchange factor (GEF) for members of the Arf family of small GTPases involved in trafficking in the early secretory pathway; its GEF activity initiates the coating of nascent vesicles via the localized generation of activated ARFs through replacement of GDP with GTP. Recruitment to cis-Golgi membranes requires membrane association of Arf-GDP and can be regulated by ARF1, ARF3, ARF4 and ARF5. Involved in the recruitment of the COPI coat complex to the endoplasmic reticulum exit sites (ERES), and the endoplasmic reticulum-Golgi intermediate (ERGIC) and cis-Golgi compartments which implicates ARF1 activation. Involved in COPI vesicle-dependent retrograde transport from the ERGIC and cis-Golgi compartments to the endoplasmic reticulum (ER). Involved in the trans-Golgi network recruitment of GGA1, GGA2, GGA3, BIG1, BIG2, and the AP-1 adaptor protein complex related to chlathrin-dependent transport; the function requires its GEF activity (probably at least in part on ARF4 and ARF5). Has GEF activity towards ARF1. Has in vitro GEF activity towards ARF5. Involved in the processing of PSAP. Required for the assembly of the Golgi apparatus. The AMPK-phosphorylated form is involved in Golgi disassembly during mitotis and under stress conditions. May be involved in the COPI vesicle-dependent recruitment of PNPLA2 to lipid droplets; however, this function is under debate. In neutrophils, involved in G protein-coupled receptor (GPCR)-mediated chemotaxis und superoxide production. Proposed to be recruited by phosphatidylinositol-phosphates generated upon GPCR stimulation to the leading edge where it recruits and activates ARF1, and is involved in recruitment of GIT2 and the NADPH oxidase complex. Plays a role in maintaining mitochondrial morphology. The chain is Golgi-specific brefeldin A-resistance guanine nucleotide exchange factor 1 from Mus musculus (Mouse).